We begin with the raw amino-acid sequence, 1674 residues long: E3 ubiquitin-protein ligase SHPRH (1674 aa).

The disordered stretch occupies residues 1–26; it reads MSSRRKRAPPMKVDEERQQQLHWNMH. Residues 12–26 are compositionally biased toward basic and acidic residues; it reads KVDEERQQQLHWNMH. Residues Ser259 and Ser261 each carry the phosphoserine modification. Positions 302–384 constitute a Helicase ATP-binding; first part domain; sequence YQREAVNWML…TVEVLALILT (83 aa). 368-375 is a binding site for ATP; that stretch reads DEMGLGKT. Residues 433–507 enclose the H15 domain; sequence HCPPTRVMIL…GFSGTFTLGK (75 aa). Residues 524–548 form a disordered region; that stretch reads SPRKIEKELRKSVNKDADSEYLPSN. The segment covering 526 to 541 has biased composition (basic and acidic residues); it reads RKIEKELRKSVNKDAD. Ser626 is subject to Phosphoserine. The segment at 649–700 adopts a PHD-type zinc-finger fold; it reads RFECICGEFDQIGHKPRVQCLKCHLWQHAKCVNYEEKNLKVKPFYCPHCLVA. A Helicase ATP-binding; second part domain is found at 701–859; sequence MEPVSTRATL…FGLVVFLGIE (159 aa). Residues 810 to 813 carry the DEAQ box motif; it reads DEAQ. The RING-type zinc-finger motif lies at 1423 to 1470; the sequence is CPICARQLGKQWAVLTCGHCFCNECTSIIIEQYSVGSHRSSIKCAICR. The Helicase C-terminal domain occupies 1505 to 1663; it reads AVVRTLMKIQ…ASVLTVAGLA (159 aa).

The protein belongs to the SNF2/RAD54 helicase family. Homodimer. Interacts with HLTF, PCNA, UBE2N and RAD18. As to expression, broadly expressed (at protein level).

It catalyses the reaction S-ubiquitinyl-[E2 ubiquitin-conjugating enzyme]-L-cysteine + [acceptor protein]-L-lysine = [E2 ubiquitin-conjugating enzyme]-L-cysteine + N(6)-ubiquitinyl-[acceptor protein]-L-lysine.. It participates in protein modification; protein ubiquitination. E3 ubiquitin-protein ligase involved in DNA repair. Upon genotoxic stress, accepts ubiquitin from the UBE2N-UBE2V2 E2 complex and transfers it to 'Lys-164' of PCNA which had been monoubiquitinated by UBE2A/B-RAD18, promoting the formation of non-canonical poly-ubiquitin chains linked through 'Lys-63'. This chain is E3 ubiquitin-protein ligase SHPRH (Shprh), found in Mus musculus (Mouse).